We begin with the raw amino-acid sequence, 325 residues long: uncharacterized protein (325 aa).

Residues 1 to 75 are disordered; sequence MSQPPEHPGN…PPPGYPTHLQ (75 aa). Positions 24–70 are enriched in pro residues; that stretch reads YPPPGYGAPPPPPGYGPPPGTYLPPGYNAPPPPPGYGPPPGPPPPGY. Transmembrane regions (helical) follow at residues 96-116, 153-173, 205-225, and 273-293; these read AVTL…VIGA, IVMF…HAGI, LLIV…GLIF, and LVGE…AALI.

Its subcellular location is the cell membrane. This is an uncharacterized protein from Mycobacterium tuberculosis (strain ATCC 25618 / H37Rv).